We begin with the raw amino-acid sequence, 275 residues long: Hydroxyethylthiazole kinase (275 aa).

Position 53 (methionine 53) interacts with substrate. Residues arginine 128 and serine 174 each contribute to the ATP site. Glycine 201 is a binding site for substrate.

It belongs to the Thz kinase family. The cofactor is Mg(2+).

The catalysed reaction is 5-(2-hydroxyethyl)-4-methylthiazole + ATP = 4-methyl-5-(2-phosphooxyethyl)-thiazole + ADP + H(+). It functions in the pathway cofactor biosynthesis; thiamine diphosphate biosynthesis; 4-methyl-5-(2-phosphoethyl)-thiazole from 5-(2-hydroxyethyl)-4-methylthiazole: step 1/1. Its function is as follows. Catalyzes the phosphorylation of the hydroxyl group of 4-methyl-5-beta-hydroxyethylthiazole (THZ). This chain is Hydroxyethylthiazole kinase, found in Kineococcus radiotolerans (strain ATCC BAA-149 / DSM 14245 / SRS30216).